A 283-amino-acid chain; its full sequence is uncharacterized protein (283 aa).

Solcar repeat units lie at residues 14 to 95 (QPVW…LKHL), 102 to 185 (NDHA…SEAV), and 190 to 274 (GLAL…TLQG). 6 helical membrane passes run 20 to 40 (TLAG…FDVI), 70 to 90 (GNVV…VAFS), 105 to 125 (AVNF…SYPL), 157 to 177 (FFPG…CFFM), 184 to 204 (AVLS…IAGA), and 249 to 266 (GLSV…ITML).

The protein belongs to the mitochondrial carrier (TC 2.A.29) family.

It is found in the mitochondrion inner membrane. This is an uncharacterized protein from Schizosaccharomyces pombe (strain 972 / ATCC 24843) (Fission yeast).